The following is a 1311-amino-acid chain: MGKKNPNARHTDAATPLTTDDSNSSSVSRRESATESKSASESESSPPRSNTKQSRTHKNVKASGKATVSSSSDSDQAVANSSANDEEKEPVCKIRIVPLEKLLASPKTKERPSRGSQQKNVTINDSSDEEPLKGSKLVLPARKSRNKNASIIELSDSEEVDEEEESLLVAIPLPKEAQQTKPEKNSSKASKESIEKRQKAQKEATTSSARAIRSVNGTRRGSLSSERSSRASSSRAESPPRPKRCVVRLKRVSLPKTKPAQKPKKMSSDSEEAATTSKKSRQRRSKSESEADSDYEAPAAEEEEEEERKSSGDEEEAANSSDSEVMPQRKRRRKKSESDKGSSDFEPEEKQKKKGRKRIKKTSSGESDGDGDDDKQKNKRKHIRKIIKTKDLDLTTKEAAKEEDDRRKRIEDRQKLYNRIFVKSESVEINELVLDFDEESKKALLQVDKGLLKKLKPHQVAGVKFMWDACFETLKESQEKPGSGCILAHCMGLGKTLQVVTLSHTLLVNTRRTGVDRVLIISPLSTVNNWAREFTSWMKFANRNDIEVYDISRYKDKPTRIFKLNEWFNEGGVCILGYDMYRILANEKAKGLRKKQREQLMQALVDPGPDLVVCDEGHLLKNEKTSISKAVTRMRTKRRIVLTGTPLQNNLREYYCMIQFVKPNLLGTYKEYMNRFVNPITNGQYTDSTERDLRLMKHRSHILHKLLEGCIQRRDYSVLAPYLPPKHEYVVYTTLSELQQKLYGYYMTTHREQSGGDVVGKGARLFQDFQDLRRIWTHPMNLRVNSDNVIAKRLLSNDDSDMEGFICDETDEDEAASNSSDSCETFKSDASMSGLAASSGKVKKRKTRNGNAGGGDSDSDLEMLGGLGGGSSVQKDDPSEWWKPFVEERELNNVHHSPKLLILLRLLQQCEAIGDKLLVFSQSLQSLDVIEHFLSLVDSNTKNYEFEGDVGDFKGCWTSGKDYFRLDGSCSVEQREAMCKQFNNITNLRARLFLISTRAGGLGINLVAANRVVIFDVSWNPSHDTQSIFRVYRFGQIKPCYIYRLIAMGTMEQKVYERQVAKQATAKRVIDEQQISRHYNQTDLMELYSYELKPSTEREMPILPKDRLFAEILTEHEKLIFKYHEHDSLLEQEEHENLTEEERKSAWAEYEAEKTRTVQASQYMSYDRNAFGNQVMGQFGNASGSVTSNKIFGFRSDILLQLLNMKISKDHQELNQNQVIQLVPTYLQQLYNEMNNGDPTMYKDLLNLHSNIVHPSGMYMNPLLYANQNPNAAGYNQGTGGVPPMAGGSVAHGPPAAPAPGFEPDKVYEID.

Residues 1–384 (MGKKNPNARH…KQKNKRKHIR (384 aa)) form a disordered region. Residues 28-40 (SRRESATESKSAS) are compositionally biased toward basic and acidic residues. Residues 61-83 (KASGKATVSSSSDSDQAVANSSA) are compositionally biased toward low complexity. The segment covering 114 to 125 (RGSQQKNVTIND) has biased composition (polar residues). 2 positions are modified to phosphoserine: S126 and S127. A compositionally biased stretch (acidic residues) spans 155 to 166 (SDSEEVDEEEES). Over residues 181 to 202 (KPEKNSSKASKESIEKRQKAQK) the composition is skewed to basic and acidic residues. Residues 219–237 (RRGSLSSERSSRASSSRAE) show a composition bias toward low complexity. A compositionally biased stretch (basic residues) spans 241–265 (RPKRCVVRLKRVSLPKTKPAQKPKK). Phosphoserine is present on residues S267, S268, and S270. Over residues 290-306 (EADSDYEAPAAEEEEEE) the composition is skewed to acidic residues. Residues S336, S338, S342, and S343 each carry the phosphoserine modification. The segment covering 336-351 (SESDKGSSDFEPEEKQ) has biased composition (basic and acidic residues). A compositionally biased stretch (basic residues) spans 352-361 (KKKGRKRIKK). A Helicase ATP-binding domain is found at 476-664 (ESQEKPGSGC…YCMIQFVKPN (189 aa)). 489 to 496 (HCMGLGKT) provides a ligand contact to ATP. The short motif at 615–618 (DEGH) is the DEGH box element. Positions 837-878 (ASSGKVKKRKTRNGNAGGGDSDSDLEMLGGLGGGSSVQKDDP) are disordered. Residues S857 and S859 each carry the phosphoserine modification. In terms of domain architecture, Helicase C-terminal spans 905–1085 (RLLQQCEAIG…SRHYNQTDLM (181 aa)). Positions 1285–1311 (MAGGSVAHGPPAAPAPGFEPDKVYEID) are disordered.

Belongs to the SNF2/RAD54 helicase family.

The protein localises to the nucleus. Its subcellular location is the chromosome. The catalysed reaction is ATP + H2O = ADP + phosphate + H(+). Functionally, global transcriptional regulator. Modifies gene expression by affecting chromatin. This is Transcriptional regulator ATRX homolog (XNP) from Drosophila melanogaster (Fruit fly).